The primary structure comprises 171 residues: 3-hydroxydecanoyl-[acyl-carrier-protein] dehydratase (171 aa).

The active site involves His70.

The protein belongs to the thioester dehydratase family. FabA subfamily. In terms of assembly, homodimer.

It is found in the cytoplasm. It catalyses the reaction a (3R)-hydroxyacyl-[ACP] = a (2E)-enoyl-[ACP] + H2O. The enzyme catalyses (3R)-hydroxydecanoyl-[ACP] = (2E)-decenoyl-[ACP] + H2O. The catalysed reaction is (2E)-decenoyl-[ACP] = (3Z)-decenoyl-[ACP]. It functions in the pathway lipid metabolism; fatty acid biosynthesis. In terms of biological role, necessary for the introduction of cis unsaturation into fatty acids. Catalyzes the dehydration of (3R)-3-hydroxydecanoyl-ACP to E-(2)-decenoyl-ACP and then its isomerization to Z-(3)-decenoyl-ACP. Can catalyze the dehydratase reaction for beta-hydroxyacyl-ACPs with saturated chain lengths up to 16:0, being most active on intermediate chain length. This Xanthomonas oryzae pv. oryzae (strain MAFF 311018) protein is 3-hydroxydecanoyl-[acyl-carrier-protein] dehydratase.